Consider the following 344-residue polypeptide: Heat-inducible transcription repressor hrcA (344 aa).

The protein belongs to the HrcA family.

Its function is as follows. Negative regulator of class I heat shock genes (grpE-dnaK-dnaJ and groELS operons). Prevents heat-shock induction of these operons. In Streptococcus pyogenes serotype M3 (strain ATCC BAA-595 / MGAS315), this protein is Heat-inducible transcription repressor hrcA.